Here is a 111-residue protein sequence, read N- to C-terminus: Natriuretic peptide TNP-b (111 aa).

The signal sequence occupies residues 1-27; it reads MVGLSRLAGGGLLLLLLLALLPLALDG. A propeptide spanning residues 28 to 71 is cleaved from the precursor; the sequence is KPAPLPQALPEALAGGTTALRRDVTEEQQQQLVAEESSGPAAGR. 2 disordered regions span residues 51–77 and 92–111; these read VTEE…PKIG and SGLG…PGGS. C80 and C96 are joined by a disulfide. A propeptide spanning residues 107-111 is cleaved from the precursor; sequence IPGGS.

The protein belongs to the natriuretic peptide family. Expressed by the venom gland.

The protein resides in the secreted. In terms of biological role, snake venom natriuretic peptide that exhibits vasoactive and probable hypotensive activity. Is only weakly active on natriuretic peptide receptor-C (NPR3). The sequence is that of Natriuretic peptide TNP-b from Oxyuranus scutellatus scutellatus (Australian taipan).